Consider the following 238-residue polypeptide: Large ribosomal subunit protein uL1 (238 aa).

This sequence belongs to the universal ribosomal protein uL1 family. In terms of assembly, part of the 50S ribosomal subunit.

Binds directly to 23S rRNA. The L1 stalk is quite mobile in the ribosome, and is involved in E site tRNA release. In terms of biological role, protein L1 is also a translational repressor protein, it controls the translation of the L11 operon by binding to its mRNA. The polypeptide is Large ribosomal subunit protein uL1 (Frankia alni (strain DSM 45986 / CECT 9034 / ACN14a)).